A 179-amino-acid polypeptide reads, in one-letter code: Bifunctional protein PyrR (179 aa).

A PRPP-binding motif is present at residues valine 97–threonine 109.

It belongs to the purine/pyrimidine phosphoribosyltransferase family. PyrR subfamily.

The enzyme catalyses UMP + diphosphate = 5-phospho-alpha-D-ribose 1-diphosphate + uracil. Functionally, regulates the transcription of the pyrimidine nucleotide (pyr) operon in response to exogenous pyrimidines. Its function is as follows. Also displays a weak uracil phosphoribosyltransferase activity which is not physiologically significant. This is Bifunctional protein PyrR from Actinobacillus pleuropneumoniae serotype 5b (strain L20).